A 192-amino-acid chain; its full sequence is ADP-ribose glycohydrolase AF_1521 (192 aa).

In terms of domain architecture, Macro spans 1-192; that stretch reads MEVLFEAKVG…VALKVFERSL (192 aa). Residues 19 to 21, 32 to 34, 39 to 44, and 140 to 146 each bind substrate; these read GDI, AAN, HGGGVA, and VSAGIYG.

It catalyses the reaction 5-O-(ADP-D-ribosyl)-L-glutamyl-[protein] + H2O = L-glutamyl-[protein] + ADP-D-ribose + H(+). It carries out the reaction 4-O-(ADP-D-ribosyl)-L-aspartyl-[protein] + H2O = L-aspartyl-[protein] + ADP-D-ribose + H(+). The enzyme catalyses alpha-NAD(+) + H2O = ADP-D-ribose + nicotinamide + H(+). Removes ADP-ribose from aspartate and glutamate residues in proteins bearing a single ADP-ribose moiety. Inactive towards proteins bearing poly-ADP-ribose. Catalyzes removal of a phosphate group from ADP-ribose 1''-phosphate (Appr1p), but with low efficiency. This is ADP-ribose glycohydrolase AF_1521 from Archaeoglobus fulgidus (strain ATCC 49558 / DSM 4304 / JCM 9628 / NBRC 100126 / VC-16).